The primary structure comprises 357 residues: Palmitoyltransferase ZDHHC20-A (357 aa).

The Cytoplasmic segment spans residues 1-14; it reads MAPSHAVRCCQRGL. Residues 15-35 traverse the membrane as a helical segment; it reads SWIPVIFINLVVCWSYYAYVV. The Lumenal portion of the chain corresponds to 36-50; sequence ELCIYTIPNVNEQVI. A helical membrane pass occupies residues 51 to 71; sequence YLVVFHAFFFMFMWSYWKTIS. At 72–166 the chain is on the cytoplasmic side; it reads SKPTNPSKEF…NNCVGFSNYK (95 aa). A DHHC domain is found at 123 to 173; the sequence is RYCDRCQLIKPDRCHHCSTCDKCVLKMDHHCPWVNNCVGFSNYKFFVLFLA. Cysteine 153 (S-palmitoyl cysteine intermediate) is an active-site residue. The chain crosses the membrane as a helical span at residues 167-187; sequence FFVLFLAYSMLYCVYIAATVL. At 188-204 the chain is on the lumenal side; that stretch reads QYFIKFWTNQLPDTHAK. The chain crosses the membrane as a helical span at residues 205-228; it reads FHVLFLFFVAAMFFISILSLFSYH. The Cytoplasmic portion of the chain corresponds to 229-357; it reads LWLVGKNRTT…PVCVTLENES (129 aa).

It belongs to the DHHC palmitoyltransferase family.

The protein localises to the golgi apparatus membrane. The protein resides in the cell membrane. It is found in the cytoplasm. It localises to the perinuclear region. Its subcellular location is the endoplasmic reticulum membrane. The protein localises to the endoplasmic reticulum-Golgi intermediate compartment membrane. It catalyses the reaction L-cysteinyl-[protein] + hexadecanoyl-CoA = S-hexadecanoyl-L-cysteinyl-[protein] + CoA. The catalysed reaction is L-cysteinyl-[protein] + tetradecanoyl-CoA = S-tetradecanoyl-L-cysteinyl-[protein] + CoA. The enzyme catalyses L-cysteinyl-[protein] + octadecanoyl-CoA = S-octadecanoyl-L-cysteinyl-[protein] + CoA. In terms of biological role, palmitoyltransferase that could catalyze the addition of palmitate onto various protein substrates. Catalyzes palmitoylation of Cys residues on protein substrates and has a preference for acyl-CoA with C16 fatty acid chains but may also utilize acyl-CoA with C14 and C18 fatty acid chains. In Danio rerio (Zebrafish), this protein is Palmitoyltransferase ZDHHC20-A.